The primary structure comprises 429 residues: Serine hydroxymethyltransferase (429 aa).

(6S)-5,6,7,8-tetrahydrofolate is bound by residues Leu126 and 130 to 132 (GHL). Lys235 carries the N6-(pyridoxal phosphate)lysine modification. Residue 359–361 (SPF) participates in (6S)-5,6,7,8-tetrahydrofolate binding.

Belongs to the SHMT family. Homodimer. Pyridoxal 5'-phosphate is required as a cofactor.

The protein localises to the cytoplasm. It carries out the reaction (6R)-5,10-methylene-5,6,7,8-tetrahydrofolate + glycine + H2O = (6S)-5,6,7,8-tetrahydrofolate + L-serine. The protein operates within one-carbon metabolism; tetrahydrofolate interconversion. It functions in the pathway amino-acid biosynthesis; glycine biosynthesis; glycine from L-serine: step 1/1. Functionally, catalyzes the reversible interconversion of serine and glycine with tetrahydrofolate (THF) serving as the one-carbon carrier. This reaction serves as the major source of one-carbon groups required for the biosynthesis of purines, thymidylate, methionine, and other important biomolecules. Also exhibits THF-independent aldolase activity toward beta-hydroxyamino acids, producing glycine and aldehydes, via a retro-aldol mechanism. This Prochlorococcus marinus (strain MIT 9313) protein is Serine hydroxymethyltransferase.